Reading from the N-terminus, the 220-residue chain is Claudin-22 (220 aa).

Over 1–10 the chain is Cytoplasmic; the sequence is MALVFRTVAQ. Residues 11-30 traverse the membrane as a helical segment; it reads LAGVSLSLLGWVLSCLTNYL. The Extracellular segment spans residues 31-81; it reads PHWKNLNLDLNEMENWTMGLWQTCVIQEEVGMQCKDFDSFLALPAELRVSR. A helical transmembrane segment spans residues 82-102; sequence ILMFLSNGLGFLGLLVSGFGL. Topologically, residues 103–117 are cytoplasmic; sequence DCLRIGESQRDLKRR. A helical transmembrane segment spans residues 118–138; the sequence is LLILGGILSWASGVTALVPVS. Topologically, residues 139-164 are extracellular; that stretch reads WVAHKTVQEFWDENVPDFVPRWEFGE. Residues 165 to 185 form a helical membrane-spanning segment; it reads ALFLGWFAGLSLLLGGCLLHC. The Cytoplasmic segment spans residues 186–220; sequence AACSSHAPLASGHYAVAQTQDHHQELETRNTNLKH.

This sequence belongs to the claudin family.

It localises to the cell junction. It is found in the tight junction. Its subcellular location is the cell membrane. Functionally, plays a major role in tight junction-specific obliteration of the intercellular space, through calcium-independent cell-adhesion activity. The sequence is that of Claudin-22 (CLDN22) from Homo sapiens (Human).